Reading from the N-terminus, the 150-residue chain is MFDVQIFDEKKFLSKKDISLIKKVSKFIFIEEKLKNKIIFELHIIDNNESQKINKQYRNKDYPTDVISFSFWEEGLLKTALLGEIYLSYEKVVSQAEEFKHSFERELGFLVSHGIYHLLGYDHEEEDEAKIMFGKQYQVLKLCGLGSVND.

Histidine 113, histidine 117, and histidine 123 together coordinate Zn(2+).

This sequence belongs to the endoribonuclease YbeY family. The cofactor is Zn(2+).

It is found in the cytoplasm. In terms of biological role, single strand-specific metallo-endoribonuclease involved in late-stage 70S ribosome quality control and in maturation of the 3' terminus of the 16S rRNA. The sequence is that of Endoribonuclease YbeY from Malacoplasma penetrans (strain HF-2) (Mycoplasma penetrans).